A 315-amino-acid chain; its full sequence is Cysteine proteinase 1 (315 aa).

Residues 1-13 (MFTFILMFYIGYG) form the signal peptide. Residues 14-93 (IDFNTWVANN…KGEVRYLNIQ (80 aa)) constitute a propeptide, activation peptide. Cystine bridges form between Cys-115/Cys-161 and Cys-152/Cys-193. Cys-118 is an active-site residue. Catalysis depends on residues His-259 and Asn-279.

Belongs to the peptidase C1 family.

The protein resides in the lysosome. Inhibited by cysteine protease inhibitors ICP1 and ICP2. Functionally, cysteine protease which degrades matrix proteins such as collagen, laminin and fibronectin and thus is involved in the destruction of human tissue. Can abolish adhesion. May play an important role in pathogenicity. In Entamoeba histolytica (strain ATCC 30459 / HM-1:IMSS / ABRM), this protein is Cysteine proteinase 1.